Here is a 403-residue protein sequence, read N- to C-terminus: Aminomethyltransferase, mitochondrial (403 aa).

The transit peptide at 1 to 28 (MHRIVSVVAPLGFRLQAQPLVQSRPLSS) directs the protein to the mitochondrion. Substrate-binding residues include Glu-232 and Arg-261. Lys-368 is subject to N6-succinyllysine. Residue Tyr-399 participates in substrate binding.

The protein belongs to the GcvT family. As to quaternary structure, the glycine cleavage system is composed of four proteins: P, T, L and H.

The protein localises to the mitochondrion. The catalysed reaction is N(6)-[(R)-S(8)-aminomethyldihydrolipoyl]-L-lysyl-[protein] + (6S)-5,6,7,8-tetrahydrofolate = N(6)-[(R)-dihydrolipoyl]-L-lysyl-[protein] + (6R)-5,10-methylene-5,6,7,8-tetrahydrofolate + NH4(+). In terms of biological role, the glycine cleavage system catalyzes the degradation of glycine. The polypeptide is Aminomethyltransferase, mitochondrial (Mus musculus (Mouse)).